Consider the following 267-residue polypeptide: L-aspartate dehydrogenase 2 (267 aa).

2 residues coordinate NAD(+): Ala123 and Asn189. His219 is an active-site residue.

Belongs to the L-aspartate dehydrogenase family.

It carries out the reaction L-aspartate + NADP(+) + H2O = oxaloacetate + NH4(+) + NADPH + H(+). It catalyses the reaction L-aspartate + NAD(+) + H2O = oxaloacetate + NH4(+) + NADH + H(+). The protein operates within cofactor biosynthesis; NAD(+) biosynthesis; iminoaspartate from L-aspartate (dehydrogenase route): step 1/1. Its function is as follows. Specifically catalyzes the NAD or NADP-dependent dehydrogenation of L-aspartate to iminoaspartate. The chain is L-aspartate dehydrogenase 2 from Bordetella pertussis (strain Tohama I / ATCC BAA-589 / NCTC 13251).